The following is a 1355-amino-acid chain: Ecdysone-induced protein 75B, isoform A (1355 aa).

Disordered stretches follow at residues 60 to 91, 126 to 228, 248 to 268, and 308 to 344; these read QHQPMHQLHHQHQHQHQHQQQAKSQQLKQQHS, RLKN…DSSY, ELEQQQTTGGSNAQQQVEAKP, and ATQQQQQQQQQHQHQQQRRDSSDSNCSLMSNSSNSSA. Positions 66 to 76 are enriched in basic residues; sequence QLHHQHQHQHQ. 2 stretches are compositionally biased toward low complexity: residues 77–91 and 143–179; these read HQQQAKSQQLKQQHS and TLVKTTTTSNSNSNNTQTTNSISQQQQQHQIVLQHQQ. Over residues 200-213 the composition is skewed to acidic residues; that stretch reads SGIDEDSPNSDEDC. Composition is skewed to polar residues over residues 218–228 and 254–264; these read PAGTSLEDSSY and TTGGSNAQQQV. Composition is skewed to low complexity over residues 308–321 and 330–344; these read ATQQQQQQQQQHQH and DSNCSLMSNSSNSSA. Positions 384-474 form a DNA-binding region, nuclear receptor; sequence SQLNYLCQKF…VGMSRDAVRF (91 aa). An NR C4-type; degenerate zinc finger spans residues 387 to 421; sequence NYLCQKFDEKLDTALSNSSANTGRNTPAVTANEDA. The NR C4-type zinc finger occupies 438–457; the sequence is CTKNQQCSILRINRNRCQYC. Residues 508–756 enclose the NR LBD domain; that stretch reads DQPRLLAAVL…QQMWSMEDGN (249 aa). Disordered stretches follow at residues 780-821, 927-964, 987-1007, 1051-1117, 1147-1260, and 1312-1344; these read KSPL…SALA, LDSPTDSGIESGNEKNECKAVSSGGSSSCSSPRSSVDD, VSVSPVRSPQPSTSSHLKRQI, AEAD…SSHS, ENST…SNSA, and TVTASNGGPPSAAASPAPSSSPPASVGSPNPGL. Low complexity-rich tracts occupy residues 797-809, 948-960, 987-1001, 1053-1098, and 1106-1117; these read GSPSSSQPQGVSL, SSGGSSSCSSPRS, VSVSPVRSPQPSTSS, ADAS…AQSQ, and SSPKASMASSHS. 2 stretches are compositionally biased toward polar residues: residues 1149-1162 and 1174-1196; these read STAASSTTNGVGNR and AVQNQQRWGSSSVITTTCQQRQQ. Composition is skewed to low complexity over residues 1197 to 1233, 1242 to 1260, and 1315 to 1343; these read SVSPHSNGSSSSSSSSSSSSSSSSSTSSNCSSSSASS, STSNGTSAPASSSSGSNSA, and ASNGGPPSAAASPAPSSSPPASVGSPNPG.

The protein belongs to the nuclear hormone receptor family. NR1 subfamily.

The protein localises to the nucleus. Functionally, implicated in the regulation of ecdysone-triggered gene hierarchies. Probably plays a key role in mediating the regulation of the larval molt by 20-OH-ecdysone. The chain is Ecdysone-induced protein 75B, isoform A (Eip75B) from Drosophila melanogaster (Fruit fly).